A 553-amino-acid polypeptide reads, in one-letter code: HTH-type transcriptional regulator SgrR (553 aa).

The HTH marR-type domain maps to 1–113; it reads MSTSRLQQQF…RQMLLSQLGR (113 aa). A DNA-binding region (H-T-H motif) is located at residues 26-49; that stretch reads LQALAEVLNCSRRHVRSLLGKMQH. A solute-binding region spans residues 163-494; sequence ELEPDLSHHW…EELHQDIESW (332 aa).

Its function is as follows. Activates the small RNA gene sgrS under glucose-phosphate stress conditions as well as yfdZ. Represses its own transcription under both stress and non-stress conditions. Might act as a sensor of the intracellular accumulation of phosphoglucose by binding these molecules in its C-terminal solute-binding domain. The sequence is that of HTH-type transcriptional regulator SgrR from Yersinia pestis bv. Antiqua (strain Antiqua).